We begin with the raw amino-acid sequence, 724 residues long: DNA ligase (724 aa).

NAD(+) is bound by residues 44–48, 93–94, and Glu127; these read DADYD and SL. The active-site N6-AMP-lysine intermediate is the Lys129. Positions 150, 186, 307, and 331 each coordinate NAD(+). Positions 437, 440, 461, and 467 each coordinate Zn(2+). One can recognise a BRCT domain in the interval 646–724; it reads TEGSPVAGKT…EDEWLALIGG (79 aa).

The protein belongs to the NAD-dependent DNA ligase family. LigA subfamily. Mg(2+) is required as a cofactor. Requires Mn(2+) as cofactor.

The catalysed reaction is NAD(+) + (deoxyribonucleotide)n-3'-hydroxyl + 5'-phospho-(deoxyribonucleotide)m = (deoxyribonucleotide)n+m + AMP + beta-nicotinamide D-nucleotide.. Its function is as follows. DNA ligase that catalyzes the formation of phosphodiester linkages between 5'-phosphoryl and 3'-hydroxyl groups in double-stranded DNA using NAD as a coenzyme and as the energy source for the reaction. It is essential for DNA replication and repair of damaged DNA. This is DNA ligase from Agrobacterium fabrum (strain C58 / ATCC 33970) (Agrobacterium tumefaciens (strain C58)).